The following is a 366-amino-acid chain: MLLPRDLLLLPWRRATAAGEAIARRLNHHRAPPFSDPDDDPPFTRLAERPPRAPSKKKKKEEEDQGGRIRPPEPASSDLPFDFRYSYSETDPAWRPIGFREPTRFSPFGPGRLDRPWDGVAAAAARGEGAGAAATSREEVLGEPLAEEEVAQLVERYRHSDCSRQINLGKGGVTHNMIDDIHNHWKRAEAVRIKCLGVPTLDMDNICFHLEDKTGGKVIYRNINILILYRGRNYDPKQRPQIPLMLWKPLAPIYPRLVQNVADGLTFEKTKELRNTGLNSSPLMKLTRNGVYVNVVDRVREAFKTVEVVRLDCSHVGSSDCKKIGVKLRDLVPCVPLLFKDEQIILWRGKVKQENSVSLQFSPEPS.

Residues 1–14 (MLLPRDLLLLPWRR) constitute a mitochondrion transit peptide. Positions 24–82 (RRLNHHRAPPFSDPDDDPPFTRLAERPPRAPSKKKKKEEEDQGGRIRPPEPASSDLPFD) are disordered. A compositionally biased stretch (basic and acidic residues) spans 60–71 (KEEEDQGGRIRP). 2 consecutive CRM domains span residues 143–241 (EPLA…QRPQ) and 263–359 (DGLT…SVSL).

In terms of assembly, part of large ribonucleo-protein complexes that include group IIB introns.

The protein resides in the mitochondrion. Functionally, may be involved in the splicing of group IIB introns in mitochondria. The protein is CRS2-associated factor 2, mitochondrial of Oryza sativa subsp. japonica (Rice).